Reading from the N-terminus, the 116-residue chain is Large ribosomal subunit protein bL20 (116 aa).

Belongs to the bacterial ribosomal protein bL20 family.

In terms of biological role, binds directly to 23S ribosomal RNA and is necessary for the in vitro assembly process of the 50S ribosomal subunit. It is not involved in the protein synthesizing functions of that subunit. In Mycoplasmopsis synoviae (strain 53) (Mycoplasma synoviae), this protein is Large ribosomal subunit protein bL20.